Consider the following 76-residue polypeptide: High-potential iron-sulfur protein isozyme 2 (76 aa).

[4Fe-4S] cluster-binding residues include Cys-38, Cys-41, Cys-54, and Cys-70.

It belongs to the high-potential iron-sulfur protein (HiPIP) family. As to quaternary structure, homodimer.

Functionally, specific class of high-redox-potential 4Fe-4S ferredoxins. Functions in anaerobic electron transport in most purple and in some other photosynthetic bacteria and in at least one genus (Paracoccus) of halophilic, denitrifying bacteria. This is High-potential iron-sulfur protein isozyme 2 (hip2) from Halorhodospira halophila (Ectothiorhodospira halophila).